A 153-amino-acid polypeptide reads, in one-letter code: UPF0266 membrane protein SG1324 (153 aa).

Transmembrane regions (helical) follow at residues 6–26, 46–66, and 68–88; these read IGLVIMIVIALLFAVFDEFIV, LDGLIFIVLLLILLYKNITTD, and KVMTSTLILFLGLMVIYLAYI.

Belongs to the UPF0266 family.

The protein resides in the cell inner membrane. This chain is UPF0266 membrane protein SG1324, found in Sodalis glossinidius (strain morsitans).